The chain runs to 215 residues: Large ribosomal subunit protein eL15 (215 aa).

The segment at 179–215 is disordered; the sequence is GTVKHKWKKKEKEREQKKRHEATKYYRLQNYDKLPGK. The segment covering 188–202 has biased composition (basic and acidic residues); the sequence is KEKEREQKKRHEATK.

The protein belongs to the eukaryotic ribosomal protein eL15 family.

In Sulfurisphaera tokodaii (strain DSM 16993 / JCM 10545 / NBRC 100140 / 7) (Sulfolobus tokodaii), this protein is Large ribosomal subunit protein eL15.